A 387-amino-acid chain; its full sequence is BTB and MATH domain-containing protein 38 (387 aa).

One can recognise an MATH domain in the interval 79-204 (EGMLKLEIPN…NEMVTVTARV (126 aa)). Residues 228–295 (CDMTLVINKQ…IYPCHKPITS (68 aa)) enclose the BTB domain.

The protein is BTB and MATH domain-containing protein 38 (bath-38) of Caenorhabditis elegans.